Reading from the N-terminus, the 793-residue chain is Spindle and centriole-associated protein 1 (793 aa).

Residues 1 to 29 are disordered; it reads MSYLRASRTSSNLSLAKKPSKTRKKLQAR. A compositionally biased stretch (basic residues) spans 18–27; it reads KPSKTRKKLQ. Residues 312–405 adopt a coiled-coil conformation; it reads SLGLLNSMIM…LTAEILSLKE (94 aa). Positions 519-542 are disordered; it reads KTVGNLSSHSAVPKRAANRLPSPP. The stretch at 622 to 712 forms a coiled coil; sequence LQNEDLVSQM…LLKLIEQQKQ (91 aa). Residues 718–739 show a composition bias toward polar residues; that stretch reads PTLSPITPQGRRTGSSLDTTPL. The tract at residues 718–783 is disordered; sequence PTLSPITPQG…RSQAANDRGE (66 aa). The segment covering 740 to 753 has biased composition (low complexity); sequence SSCSTSGRRSSGAS. Residues 754 to 778 are compositionally biased toward polar residues; it reads NKSESISTSVGSLRSASTGRRSQAA.

The protein localises to the cytoplasm. Its subcellular location is the cytoskeleton. It is found in the microtubule organizing center. The protein resides in the centrosome. It localises to the centriole. The protein localises to the spindle. In terms of biological role, regulator required for centriole duplication. The protein is Spindle and centriole-associated protein 1 (spice1) of Xenopus laevis (African clawed frog).